A 477-amino-acid polypeptide reads, in one-letter code: Glycogen synthase (477 aa).

Lys-15 lines the ADP-alpha-D-glucose pocket.

This sequence belongs to the glycosyltransferase 1 family. Bacterial/plant glycogen synthase subfamily.

It carries out the reaction [(1-&gt;4)-alpha-D-glucosyl](n) + ADP-alpha-D-glucose = [(1-&gt;4)-alpha-D-glucosyl](n+1) + ADP + H(+). Its pathway is glycan biosynthesis; glycogen biosynthesis. Functionally, synthesizes alpha-1,4-glucan chains using ADP-glucose. This Caldicellulosiruptor saccharolyticus (strain ATCC 43494 / DSM 8903 / Tp8T 6331) protein is Glycogen synthase.